Reading from the N-terminus, the 765-residue chain is Probable ATP-dependent RNA helicase DDX27 (765 aa).

A disordered region spans residues 1–48 (MLSELGFIRTIGEDEDVQVEPETDSEDEEEEGPIVLGRKQKALQKNRS). Residues 13–32 (EDEDVQVEPETDSEDEEEEG) are compositionally biased toward acidic residues. A phosphoserine mark is found at Ser-25 and Ser-48. Positions 55-57 (FVF) match the Required for interaction with the PEBOW complex motif. Positions 88 to 148 (EKIEKVRKKR…ESETDYSSAD (61 aa)) are disordered. Positions 98–119 (KTEDKEAKSGKSEKEKEAKEGS) are enriched in basic and acidic residues. Phosphoserine is present on residues Ser-135 and Ser-146. Residues 164–169 (KKKKKK) carry the Nuclear localization signal motif. The Q motif motif lies at 187–215 (LSFQDMNLSRPLLKAITAMGFKQPTPIQK). One can recognise a Helicase ATP-binding domain in the interval 218-392 (IPVGLLGKDI…SVSLKNPVRI (175 aa)). Position 231 to 238 (231 to 238 (AATGTGKT)) interacts with ATP. Positions 340-343 (DEAD) match the DEAD box motif. The 147-residue stretch at 426-572 (LLMRTFTDHV…DVILKFRDKI (147 aa)) folds into the Helicase C-terminal domain. Composition is skewed to basic residues over residues 685–694 (KRNRRAKRAR) and 744–765 (LGLP…KRRK). Residues 685-765 (KRNRRAKRAR…KSKSRYKRRK (81 aa)) form a disordered region.

It belongs to the DEAD box helicase family. DDX27/DRS1 subfamily. As to quaternary structure, associates with PeBoW complex, composed of BOP1, PES1 and WDR12. Interacts directly with BOP1 and PES1.

The protein localises to the nucleus. Its subcellular location is the nucleolus. It localises to the chromosome. The catalysed reaction is ATP + H2O = ADP + phosphate + H(+). Functionally, probable ATP-dependent RNA helicase. Component of the nucleolar ribosomal RNA (rRNA) processing machinery that regulates 3' end formation of ribosomal 47S rRNA. In Bos taurus (Bovine), this protein is Probable ATP-dependent RNA helicase DDX27 (DDX27).